The following is a 387-amino-acid chain: Oxidase FUB9 (387 aa).

Positions 1-20 are disordered; it reads MSRTNLPIQPAKMSDATSSK. An FMN hydroxy acid dehydrogenase domain is found at 18-379; it reads SSKPQIFSIQ…TPAHLSLLNA (362 aa). Tyrosine 44 serves as a coordination point for a 2-oxocarboxylate. FMN-binding residues include serine 126, glutamine 150, and threonine 178. Residue arginine 187 coordinates a 2-oxocarboxylate. Residue lysine 250 participates in FMN binding. The active-site Proton acceptor is histidine 274. Position 277 (arginine 277) interacts with a 2-oxocarboxylate. FMN-binding positions include 305-309 and 328-329; these read DGGFR and GR.

It belongs to the FMN-dependent alpha-hydroxy acid dehydrogenase family. Requires FMN as cofactor.

It participates in mycotoxin biosynthesis. Oxidase; part of the gene cluster that mediates the biosynthesis of fusaric acid, a mycotoxin with low to moderate toxicity to animals and humans, but with high phytotoxic properties. L-aspartate is suggested as fusaric acid amino acid precursor that is activated and further processed to O-acetyl-L-homoserine by cluster enzymes aspartate kinase FUB3 and homoserine O-acetyltransferase FUB5, as well as enzymes of the primary metabolism. The polyketide synthase (PKS) FUB1 generates the triketide trans-2-hexenal which is presumptively released by the hydrolase FUB4 and linked to the NRPS-bound amino acid precursor by NAD(P)-dependent dehydrogenase FUB6. FUB1, FUB4, and the non-canonical NRPS Fub8 may form an enzyme complex. Further processing of the NRPS-bound intermediate might be carried out by FUB6 and the sulfhydrylase FUB7, enabling a spontaneous electrocyclization to close the carbon backbone of fusaric acid. Dihydrofusaric acid is likely to be released via reduction by the thioester reductase (TR) domain of FUB8 whereupon the final oxidation to fusaric acid may (also) be performed by the FMN-dependent dehydrogenase FUB9. The chain is Oxidase FUB9 from Gibberella moniliformis (strain M3125 / FGSC 7600) (Maize ear and stalk rot fungus).